Reading from the N-terminus, the 493-residue chain is Acetylcholine receptor subunit beta (493 aa).

The N-terminal stretch at 1 to 24 (MENVRRMALGLVVMMALALSGVGA) is a signal peptide. Residues 25 to 240 (SVMEDTLLSV…VTFYLIIQRK (216 aa)) are Extracellular-facing. A disulfide bridge connects residues Cys152 and Cys166. Residue Asn165 is glycosylated (N-linked (GlcNAc...) asparagine). 3 helical membrane-spanning segments follow: residues 241–265 (PLFYIVYTIIPCILISILAILVFYL), 273–291 (MSLSISALLAVTVFLLLLA), and 307–328 (YLMFIMILVAFSVILSVVVLNL). The Cytoplasmic segment spans residues 329 to 461 (HHRSPNTHTM…WQYVAMVADR (133 aa)). Phosphotyrosine; by Tyr-kinases is present on Tyr379. The chain crosses the membrane as a helical span at residues 462-480 (LFLYVFFVICSIGTFSIFL).

The protein belongs to the ligand-gated ion channel (TC 1.A.9) family. Acetylcholine receptor (TC 1.A.9.1) subfamily. Beta-1/CHRNB1 sub-subfamily. In terms of assembly, pentamer of two alpha chains, and one each of the beta, delta, and gamma chains.

Its subcellular location is the postsynaptic cell membrane. The protein resides in the cell membrane. It catalyses the reaction K(+)(in) = K(+)(out). The enzyme catalyses Na(+)(in) = Na(+)(out). In terms of biological role, after binding acetylcholine, the AChR responds by an extensive change in conformation that affects all subunits and leads to opening of an ion-conducting channel across the plasma membrane. The polypeptide is Acetylcholine receptor subunit beta (CHRNB1) (Tetronarce californica (Pacific electric ray)).